The following is a 75-amino-acid chain: Mitochondrial import receptor subunit TOM7-1 (75 aa).

Met1 is subject to N-acetylmethionine. A disordered region spans residues 1-28 (MESTISLKVNKGKGKGSKGASSSDDKSK). At 1-46 (MESTISLKVNKGKGKGSKGASSSDDKSKFDVVKEWTNWSLKKAKVV) the chain is on the cytoplasmic side. The helical transmembrane segment at 47-64 (THYGFIPLVIFVGMNSDP) threads the bilayer. Over 65 to 75 (KPHLFQLLSPV) the chain is Mitochondrial intermembrane.

The protein belongs to the Tom7 family. As to quaternary structure, forms part of the preprotein translocase complex of the outer mitochondrial membrane (TOM complex) which consists of at least 6 different proteins (TOM5, TOM6, TOM7, TOM20, TOM22/TOM9 and TOM40). As to expression, expressed in roots, flowers, young cotyledons and leaves.

The protein localises to the mitochondrion outer membrane. In terms of biological role, seems to act as a modulator of the dynamics of the mitochondrial protein transport machinery. Seems to promote the dissociation of subunits of the outer membrane translocase. The sequence is that of Mitochondrial import receptor subunit TOM7-1 (TOM7-1) from Arabidopsis thaliana (Mouse-ear cress).